We begin with the raw amino-acid sequence, 56 residues long: Large ribosomal subunit protein bL32c (56 aa).

The protein belongs to the bacterial ribosomal protein bL32 family.

It is found in the plastid. The protein localises to the chloroplast. The polypeptide is Large ribosomal subunit protein bL32c (Tupiella akineta (Green alga)).